Reading from the N-terminus, the 577-residue chain is MRTSQLFYKTSKNANKDAAVLSYELLEKAGYIFKTAKGVYTYTPLFWRVALKMMDIVREELNAIGGQELMLPILHPAELWQKTGRWEAFRSEGLLYTLTDREDKELCLAPTHEEVVTMFVSQWLSGRKQLPIHLYQIATKFRDEIRPRFGLMRAREFLMEDSYTFSDSPEQMNEQYDKLRRAYQKIFDRLEIKYVIVEADGGKIGKGKSEEFHVLCSLGEDTICVSGDYGANIEAAVALPVQYTYDKEFLPIEEVATPDVRTIENLQDFFSIPPYRIMKTLVVKLSYGEKNTFVAIGIRGDRQINLTKIRSKLNADECALASDEEIQNNLGTEKGFVGPLNCPIEFYADETTRCMTNFICAGNAKDKHYKNVNWDRDIPRPEYADFLLAEAGDLCPSNGNAPYEIFEGVEVAHIFNLGTRYTECFDVGFQNEQGEQQTCWMGTYGIGIGRTLAACVEQLADDRGIVWPKAIAPFDISILYNGGDSASQEAAEKIYTELQNSGYAPLLDDRNERLGFKLKDSDLIGIPYKLILGKTFLNSGTLEIESRSGEKFSVQPKDFVHWCENYLPQSQKLSSAS.

This sequence belongs to the class-II aminoacyl-tRNA synthetase family. ProS type 1 subfamily. As to quaternary structure, homodimer.

It is found in the cytoplasm. The enzyme catalyses tRNA(Pro) + L-proline + ATP = L-prolyl-tRNA(Pro) + AMP + diphosphate. Functionally, catalyzes the attachment of proline to tRNA(Pro) in a two-step reaction: proline is first activated by ATP to form Pro-AMP and then transferred to the acceptor end of tRNA(Pro). As ProRS can inadvertently accommodate and process non-cognate amino acids such as alanine and cysteine, to avoid such errors it has two additional distinct editing activities against alanine. One activity is designated as 'pretransfer' editing and involves the tRNA(Pro)-independent hydrolysis of activated Ala-AMP. The other activity is designated 'posttransfer' editing and involves deacylation of mischarged Ala-tRNA(Pro). The misacylated Cys-tRNA(Pro) is not edited by ProRS. This is Proline--tRNA ligase from Chlamydia felis (strain Fe/C-56) (Chlamydophila felis).